A 180-amino-acid polypeptide reads, in one-letter code: Cell number regulator 7 (180 aa).

A helical membrane pass occupies residues 80–102 (AAAGAIYTLLACFTGFQCHWIYS).

The protein belongs to the cornifelin family. As to expression, expressed in roots, leaves, immature ears and silks. Detected preferentially in silks.

It is found in the membrane. This is Cell number regulator 7 (CNR7) from Zea mays (Maize).